The primary structure comprises 190 residues: Holliday junction branch migration complex subunit RuvA (190 aa).

The interval 1 to 64 is domain I; it reads MIGRITGTLI…EDAQLLYGFG (64 aa). The domain II stretch occupies residues 65–137; that stretch reads SSAERSTFRE…MRGKLGADIG (73 aa). A flexible linker region spans residues 137-141; it reads GATPH. The domain III stretch occupies residues 142–190; that stretch reads AAGGHQSDILNALLALGYSDKESQAALKKLPEGVDVSEGIRLALKALVR.

Belongs to the RuvA family. In terms of assembly, homotetramer. Forms an RuvA(8)-RuvB(12)-Holliday junction (HJ) complex. HJ DNA is sandwiched between 2 RuvA tetramers; dsDNA enters through RuvA and exits via RuvB. An RuvB hexamer assembles on each DNA strand where it exits the tetramer. Each RuvB hexamer is contacted by two RuvA subunits (via domain III) on 2 adjacent RuvB subunits; this complex drives branch migration. In the full resolvosome a probable DNA-RuvA(4)-RuvB(12)-RuvC(2) complex forms which resolves the HJ.

The protein resides in the cytoplasm. Its function is as follows. The RuvA-RuvB-RuvC complex processes Holliday junction (HJ) DNA during genetic recombination and DNA repair, while the RuvA-RuvB complex plays an important role in the rescue of blocked DNA replication forks via replication fork reversal (RFR). RuvA specifically binds to HJ cruciform DNA, conferring on it an open structure. The RuvB hexamer acts as an ATP-dependent pump, pulling dsDNA into and through the RuvAB complex. HJ branch migration allows RuvC to scan DNA until it finds its consensus sequence, where it cleaves and resolves the cruciform DNA. This is Holliday junction branch migration complex subunit RuvA from Bordetella parapertussis (strain 12822 / ATCC BAA-587 / NCTC 13253).